A 278-amino-acid chain; its full sequence is uncharacterized protein (278 aa).

The Cytoplasmic segment spans residues 1-34 (MAKTIKVIRKKDPKKKNLSDPLAKQKLVWKIGHV). Residues 35–55 (LTLVFGLLFSITYFYHVLIFF) form a helical membrane-spanning segment. The Extracellular portion of the chain corresponds to 56–129 (KYRSWKWLFL…DLLSSENFHT (74 aa)). The chain crosses the membrane as a helical span at residues 130-150 (LLIACLWFFGGGKSFYKILPY). Residues 151 to 180 (MILSYLHLTKMNYELNANKEEKIPLTPKDR) are Cytoplasmic-facing. A helical transmembrane segment spans residues 181–201 (KMLHLLAYSELLVILALTLDT). The Extracellular portion of the chain corresponds to 202-205 (ILFK). The helical transmembrane segment at 206–222 (TGTSGFMLVIYVGIYWL) threads the bilayer. The Cytoplasmic segment spans residues 223 to 278 (RLNFSPYAQVAVLELLVKFEKYVPKKYRDKWQVIKNFIYMKMKEHEKRTEEVARYA).

Its subcellular location is the cell membrane. This is an uncharacterized protein from Saccharomyces cerevisiae (strain ATCC 204508 / S288c) (Baker's yeast).